We begin with the raw amino-acid sequence, 932 residues long: Probable serine/threonine-protein kinase clkA (932 aa).

A compositionally biased stretch (basic residues) spans 1-10 (MDRFQTKRKT). 3 disordered regions span residues 1 to 21 (MDRFQTKRKTYSYNGYSNNDY), 39 to 198 (YKNN…YGDT), and 212 to 562 (NDYD…TNTN). Low complexity-rich tracts occupy residues 11–21 (YSYNGYSNNDY) and 39–123 (YKNN…ENNY). Residues 124–143 (FQSENQSNKDQNSYFNSSYL) are compositionally biased toward polar residues. Composition is skewed to low complexity over residues 148–196 (DNYN…NSYG), 218–305 (NNNN…NGGN), 314–342 (VFNNNNNNNNNNNNNYNNYNSNNNYNNDY), and 351–562 (NIYS…TNTN). A Protein kinase domain is found at 590–920 (YKVLCTVGSG…ASDALSHPFL (331 aa)). Residues 596-604 (VGSGTFSTV) and Lys-619 each bind ATP. Residue Asp-719 is the Proton acceptor of the active site.

This sequence belongs to the protein kinase superfamily. CMGC Ser/Thr protein kinase family.

The catalysed reaction is L-seryl-[protein] + ATP = O-phospho-L-seryl-[protein] + ADP + H(+). It carries out the reaction L-threonyl-[protein] + ATP = O-phospho-L-threonyl-[protein] + ADP + H(+). This chain is Probable serine/threonine-protein kinase clkA (clkA), found in Dictyostelium discoideum (Social amoeba).